We begin with the raw amino-acid sequence, 135 residues long: Lymphocyte antigen 6 complex locus protein G6d (135 aa).

The signal sequence occupies residues 1–19; the sequence is MNSQLVGILLSALLGVALG. The 100-residue stretch at 22-121 folds into the UPAR/Ly6 domain; that stretch reads TRCYDCGGGP…ASSVTPLCIL (100 aa). Intrachain disulfides connect Cys24–Cys48, Cys27–Cys35, Cys42–Cys76, Cys82–Cys101, and Cys102–Cys107. Thr68 carries an O-linked (GalNAc...) threonine glycan. The GPI-anchor amidated asparagine moiety is linked to residue Asn108. Residues 109–135 constitute a propeptide, removed in mature form; that stretch reads SAVASSVTPLCILAAAVTTLAWLLPGL.

Homodimer. Post-translationally, O-glycosylated. As to expression, expressed in embryonic tissue and adult lung, kidney, brain, liver and spleen.

It localises to the cell membrane. The protein localises to the cell projection. Its subcellular location is the filopodium. This Mus musculus (Mouse) protein is Lymphocyte antigen 6 complex locus protein G6d (Ly6g6d).